Consider the following 766-residue polypeptide: Pumilio domain-containing protein 12 (766 aa).

Disordered regions lie at residues 63–98 (KKSSSTSVFDNDGTRDSLCSESSFGSQPAPKKKSKK) and 152–197 (AQEE…GDES). A compositionally biased stretch (polar residues) spans 79-88 (SLCSESSFGS). Over residues 179–193 (PADDENLESVDEQAG) the composition is skewed to acidic residues. Positions 245–602 (ARAQKCKELW…LYAGITENLY (358 aa)) constitute a PUM-HD domain. 4 Pumilio repeats span residues 313 to 348 (ELTPEIVRMSKNVYSKFFVKKMLKNGTKEQRDIIIN), 461 to 496 (SLKDKIPEFIHTPDGAKLAIKLIWFAPVKERKLIVK), 497 to 534 (NFKDLSVKAAMEHYGHRVLLALFDTVDDTVLLNKVIVS), and 535 to 571 (ELANEMKKLIEDDWGEKVIHYLVHPRDGRGIDKREIT).

The polypeptide is Pumilio domain-containing protein 12 (puf-12) (Caenorhabditis elegans).